The chain runs to 432 residues: RING finger protein 44 (432 aa).

The disordered stretch occupies residues 1–86; it reads MRPWALAVTR…GGSPRMLHPA (86 aa). Residues 56 to 65 are compositionally biased toward pro residues; the sequence is QQPPSRPPHL. The RING-type; atypical zinc finger occupies 380–421; it reads CVVCFSDFEARQLLRVLPCNHEFHTKCVDKWLKANRTCPICR.

The polypeptide is RING finger protein 44 (RNF44) (Homo sapiens (Human)).